The chain runs to 604 residues: Glutamine--fructose-6-phosphate aminotransferase [isomerizing] (604 aa).

The Nucleophile; for GATase activity role is filled by cysteine 2. In terms of domain architecture, Glutamine amidotransferase type-2 spans 2–218 (CGIVGVVGNR…DKELVILTKD (217 aa)). SIS domains are found at residues 284–423 (IITS…ANGK) and 456–594 (VQAL…VDKP). The active-site For Fru-6P isomerization activity is lysine 599.

As to quaternary structure, homodimer.

It is found in the cytoplasm. It catalyses the reaction D-fructose 6-phosphate + L-glutamine = D-glucosamine 6-phosphate + L-glutamate. Catalyzes the first step in hexosamine metabolism, converting fructose-6P into glucosamine-6P using glutamine as a nitrogen source. This is Glutamine--fructose-6-phosphate aminotransferase [isomerizing] from Streptococcus pyogenes serotype M18 (strain MGAS8232).